The following is a 378-amino-acid chain: 1-acyl-sn-glycerol-3-phosphate acyltransferase delta (378 aa).

Residues 11 to 31 form a helical membrane-spanning segment; sequence FLCHLVFCYVFIASGLIVNAI. The HXXXXD motif motif lies at 96–101; that stretch reads HKFEID. The next 3 membrane-spanning stretches (helical) occupy residues 125–145, 311–331, and 338–358; these read ELAY…IFCT, WLFW…SMVS, and LASL…MIGV.

Belongs to the 1-acyl-sn-glycerol-3-phosphate acyltransferase family. In terms of tissue distribution, expressed at a high levels in the brain, at intermediate or low levels in skeletal muscles, gut, kidney, spleen and lung. Barely detectable in heart and liver.

The protein localises to the endoplasmic reticulum membrane. It carries out the reaction a 1-acyl-sn-glycero-3-phosphate + an acyl-CoA = a 1,2-diacyl-sn-glycero-3-phosphate + CoA. The catalysed reaction is (4Z,7Z,10Z,13Z,16Z,19Z)-docosahexaenoyl-CoA + 1-hexadecanoyl-sn-glycero-3-phosphate = 1-hexadecanoyl-2-(4Z,7Z,10Z,13Z,16Z,19Z-docosahexaenoyl)-sn-glycero-3-phosphate + CoA. It catalyses the reaction 1-octadecanoyl-sn-glycero-3-phosphate + (9Z,12Z)-octadecadienoyl-CoA = 1-octadecanoyl-2-(9Z,12Z-octadecadienoyl)-sn-glycero-3-phosphate + CoA. The enzyme catalyses 1-octadecanoyl-sn-glycero-3-phosphate + (4Z,7Z,10Z,13Z,16Z,19Z)-docosahexaenoyl-CoA = 1-octadecanoyl-2-(4Z,7Z,10Z,13Z,16Z,19Z-docosahexaenoyl)-sn-glycero-3-phosphate + CoA. It carries out the reaction (4Z,7Z,10Z,13Z,16Z,19Z)-docosahexaenoyl-CoA + 1-(9Z-octadecenoyl)-sn-glycero-3-phosphate = 1-(9Z-octadecenoyl)-2-(4Z,7Z,10Z,13Z,16Z,19Z-docosahexaenoyl)-sn-glycero-3-phosphate + CoA. It functions in the pathway phospholipid metabolism; CDP-diacylglycerol biosynthesis; CDP-diacylglycerol from sn-glycerol 3-phosphate: step 2/3. Its function is as follows. Converts 1-acyl-sn-glycerol-3-phosphate (lysophosphatidic acid or LPA) into 1,2-diacyl-sn-glycerol-3-phosphate (phosphatidic acid or PA) by incorporating an acyl moiety at the sn-2 position of the glycerol backbone. Exhibits high acyl-CoA specificity for polyunsaturated fatty acyl-CoA, especially docosahexaenoyl-CoA (22:6-CoA, DHA-CoA). This chain is 1-acyl-sn-glycerol-3-phosphate acyltransferase delta (Agpat4), found in Mus musculus (Mouse).